The following is a 318-amino-acid chain: Leucine-rich repeat domain-containing protein YddK (318 aa).

LRR repeat units follow at residues asparagine 109–aspartate 129, arginine 130–asparagine 151, serine 153–serine 173, serine 174–glutamate 194, tryptophan 195–glutamate 216, leucine 217–asparagine 237, leucine 238–phenylalanine 258, asparagine 260–threonine 280, and serine 284–aspartate 305.

This is Leucine-rich repeat domain-containing protein YddK (yddK) from Escherichia coli (strain K12).